Consider the following 294-residue polypeptide: MPKGTIVKALSGFYYVQNEDGLFQCRGRGNFRNRNIKPLVGDEVVFEAENKTDGYVLEIMERKNELLRPPIANVDRAILVFSAAEPTFSPLLLDRFLVHVEANGIEPLIVISKIDLLTEEELETIKQYRNDYEQLGYKVYLTSTIEQLGLDAIRKEFDDHVSVIAGQSGVGKSSLLNAINPALDIETNQISSHLGRGKHTTRHVELIPFGSGLVADTPGFSSLDFIDMEPEELSHYFPEMRDRLPSCKFRGCTHTQEPKCAVKEALAQGEIREFRYEHYVTFLEEVKTQHKRRF.

The 161-residue stretch at 63-223 (KNELLRPPIA…VADTPGFSSL (161 aa)) folds into the CP-type G domain. Residues 112–115 (SKID) and 166–174 (GQSGVGKSS) each bind GTP. Zn(2+) contacts are provided by Cys-247, Cys-252, His-254, and Cys-260.

This sequence belongs to the TRAFAC class YlqF/YawG GTPase family. RsgA subfamily. In terms of assembly, monomer. Associates with 30S ribosomal subunit, binds 16S rRNA. Requires Zn(2+) as cofactor.

Its subcellular location is the cytoplasm. Functionally, one of several proteins that assist in the late maturation steps of the functional core of the 30S ribosomal subunit. Helps release RbfA from mature subunits. May play a role in the assembly of ribosomal proteins into the subunit. Circularly permuted GTPase that catalyzes slow GTP hydrolysis, GTPase activity is stimulated by the 30S ribosomal subunit. This is Small ribosomal subunit biogenesis GTPase RsgA from Halalkalibacterium halodurans (strain ATCC BAA-125 / DSM 18197 / FERM 7344 / JCM 9153 / C-125) (Bacillus halodurans).